We begin with the raw amino-acid sequence, 267 residues long: 2-oxoglutarate synthase subunit KorB (267 aa).

As to quaternary structure, heterotetramer of the KorA, KorB, KorC and KorD subunits.

It catalyses the reaction 2 oxidized [2Fe-2S]-[ferredoxin] + 2-oxoglutarate + CoA = succinyl-CoA + 2 reduced [2Fe-2S]-[ferredoxin] + CO2 + H(+). The protein is 2-oxoglutarate synthase subunit KorB (korB) of Archaeoglobus fulgidus (strain ATCC 49558 / DSM 4304 / JCM 9628 / NBRC 100126 / VC-16).